The following is a 92-amino-acid chain: Kinetoplastid membrane protein 11B (92 aa).

It belongs to the KMP-11 family. Monomer.

The protein localises to the cytoplasm. Its subcellular location is the cytoskeleton. The protein resides in the cell projection. It localises to the cilium. It is found in the flagellum. May be involved in the regulation of the cytoskeleton through interaction with the subpellicular microtubules. May be involved in parasite mobility and attachment to the surface of the host cell. Behaves as a strong immunogen during infection. This chain is Kinetoplastid membrane protein 11B (KMP-11B), found in Leishmania infantum.